A 248-amino-acid chain; its full sequence is UDP-2,3-diacylglucosamine hydrolase (248 aa).

Asp8, His10, Asp41, Asn79, and His114 together coordinate Mn(2+). 79–80 (NR) contributes to the substrate binding site. 5 residues coordinate substrate: Asp122, Ser160, Asp171, Gln174, and His202. Mn(2+) contacts are provided by His202 and His204.

Belongs to the LpxH family. Mn(2+) serves as cofactor.

The protein resides in the cell inner membrane. It catalyses the reaction UDP-2-N,3-O-bis[(3R)-3-hydroxytetradecanoyl]-alpha-D-glucosamine + H2O = 2-N,3-O-bis[(3R)-3-hydroxytetradecanoyl]-alpha-D-glucosaminyl 1-phosphate + UMP + 2 H(+). The protein operates within glycolipid biosynthesis; lipid IV(A) biosynthesis; lipid IV(A) from (3R)-3-hydroxytetradecanoyl-[acyl-carrier-protein] and UDP-N-acetyl-alpha-D-glucosamine: step 4/6. Its function is as follows. Hydrolyzes the pyrophosphate bond of UDP-2,3-diacylglucosamine to yield 2,3-diacylglucosamine 1-phosphate (lipid X) and UMP by catalyzing the attack of water at the alpha-P atom. Involved in the biosynthesis of lipid A, a phosphorylated glycolipid that anchors the lipopolysaccharide to the outer membrane of the cell. This chain is UDP-2,3-diacylglucosamine hydrolase, found in Stenotrophomonas maltophilia (strain K279a).